The primary structure comprises 25 residues: Chaperonin GroEL (25 aa).

Belongs to the chaperonin (HSP60) family. In terms of assembly, forms a cylinder of 14 subunits composed of two heptameric rings stacked back-to-back. Interacts with the co-chaperonin GroES.

It is found in the cytoplasm. The catalysed reaction is ATP + H2O + a folded polypeptide = ADP + phosphate + an unfolded polypeptide.. Together with its co-chaperonin GroES, plays an essential role in assisting protein folding. The GroEL-GroES system forms a nano-cage that allows encapsulation of the non-native substrate proteins and provides a physical environment optimized to promote and accelerate protein folding. The protein is Chaperonin GroEL of Delftia acidovorans (Pseudomonas acidovorans).